The primary structure comprises 98 residues: Integration host factor subunit alpha (98 aa).

A disordered region spans residues 49–71 (FGNFDLRDKNQRPGRNPKTGEDI).

It belongs to the bacterial histone-like protein family. Heterodimer of an alpha and a beta chain.

Functionally, this protein is one of the two subunits of integration host factor, a specific DNA-binding protein that functions in genetic recombination as well as in transcriptional and translational control. The polypeptide is Integration host factor subunit alpha (Shewanella halifaxensis (strain HAW-EB4)).